Consider the following 1138-residue polypeptide: Serine/threonine/tyrosine-interacting-like protein 2 (1138 aa).

Residues 1–20 (MATGGDAEEEQVVPNEEDEA) are disordered. In terms of domain architecture, Tyrosine-protein phosphatase spans 132–280 (NEVDEVWPNV…LRELNEKLME (149 aa)). Ser-291 carries the phosphoserine modification. Disordered stretches follow at residues 309–336 (EEED…VTLI), 348–473 (EWRK…TWDM), 486–515 (ARKY…DDEE), 552–575 (KKDS…GEKN), 592–618 (QKKV…AKKR), 660–694 (AAPS…LPNL), 761–800 (SGCL…VRGT), and 850–1117 (FKKK…DEAI). Polar residues predominate over residues 316 to 331 (SHLSGSSLGKASQVSK). A Phosphoserine modification is found at Ser-373. A compositionally biased stretch (acidic residues) spans 376–385 (DGDDCEDEDV). Over residues 386–409 (ERIIQEWQSRNERYQAKGREQWNR) the composition is skewed to basic and acidic residues. Thr-427 is modified (phosphothreonine). Ser-503 and Ser-555 each carry phosphoserine. Basic and acidic residues-rich tracts occupy residues 552–567 (KKDS…HGTE) and 595–614 (VGSE…DTVL). The span at 672-687 (SVLSTQSHRSHASNMP) shows a compositional bias: polar residues. Positions 773-788 (SSDVQSVLSSTSSLTS) are enriched in low complexity. A compositionally biased stretch (acidic residues) spans 858-871 (DEDMSVGDRDEDTD). Residue Ser-862 is modified to Phosphoserine. The segment covering 878 to 897 (RYSSRSNSQKPETDASSSLA) has biased composition (polar residues). Residue Ser-929 is modified to Phosphoserine. Low complexity predominate over residues 936 to 947 (SGSSRGRYTRSS). Over residues 965 to 977 (RSQEQDTSFHEAN) the composition is skewed to basic and acidic residues. Phosphoserine is present on Ser-966. Residues 980–992 (TVRNTSRFSSSTT) show a composition bias toward polar residues. Ser-1016 carries the post-translational modification Phosphoserine. Basic and acidic residues-rich tracts occupy residues 1035 to 1059 (PEPR…KSDF) and 1074 to 1091 (RSEE…EEGR). Residues 1095–1106 (GRQSQYRRSTNQ) show a composition bias toward polar residues. Residues 1107–1116 (QEEEEMDDEA) show a composition bias toward acidic residues.

The protein belongs to the protein-tyrosine phosphatase family. Non-receptor class dual specificity subfamily.

The protein resides in the cytoplasm. It localises to the myofibril. It is found in the sarcomere. Functionally, may be required for myofiber maturation. The protein is Serine/threonine/tyrosine-interacting-like protein 2 (Styxl2) of Mus musculus (Mouse).